The chain runs to 551 residues: MFS-type transporter ATEG_00331 (551 aa).

The N-terminal stretch at 1 to 18 is a signal peptide; sequence MKAWLLVSSLCLSTFIAA. 4 helical membrane passes run 40–60, 71–91, 102–122, and 132–152; these read LEFTWIGTAYLLPAAASTPPW, PVLMISIVVFFIGSLIGALAI, IQGTGGGGILGLSATVIGDVF, and GVLGVTWGVACGLGPIVGGAF. N-linked (GlcNAc...) asparagine glycosylation is found at Asn-165 and Asn-178. The next 8 helical transmembrane spans lie at 179–199, 206–228, 233–255, 324–344, 354–374, 380–400, 417–437, and 493–513; these read LTTSVPVAGVAGALVLLFLEV, IIEGLLAMDWLGTITIVGATVMF, GYGGIAYPWNSATVVCLIVFGIG, VYLLPVAVTLCVASTATGLYI, IYFGLVMMILGHGLYINLQPY, IIIFQIIAGLGLGPLFQAPII, TVFFARDIATAMSIVFGGVIF, and SEWIFYTALSGAALLLSVFIS. N-linked (GlcNAc...) asparagine glycosylation is present at Asn-524.

It belongs to the major facilitator superfamily. TCR/Tet family.

It localises to the membrane. Its function is as follows. MFS-type transporter; part of the gene cluster that mediates the biosynthesis of isoflavipucine. The chain is MFS-type transporter ATEG_00331 from Aspergillus terreus (strain NIH 2624 / FGSC A1156).